Here is a 209-residue protein sequence, read N- to C-terminus: Thymidylate kinase (209 aa).

Residue 10-17 (GLDGAGKS) coordinates ATP.

The protein belongs to the thymidylate kinase family.

The catalysed reaction is dTMP + ATP = dTDP + ADP. Functionally, phosphorylation of dTMP to form dTDP in both de novo and salvage pathways of dTTP synthesis. The sequence is that of Thymidylate kinase from Francisella tularensis subsp. novicida (strain U112).